Here is a 639-residue protein sequence, read N- to C-terminus: CTTNBP2 N-terminal-like protein (639 aa).

Residues 87 to 285 (MKQCKNMQER…DLEASHQHSS (199 aa)) adopt a coiled-coil conformation. Phosphoserine is present on residues Ser284 and Ser285. Disordered regions lie at residues 387–430 (VENG…PCSS), 463–490 (RHKF…LSPT), and 511–609 (RFTS…AASL). Low complexity-rich tracts occupy residues 407-430 (PSSG…PCSS) and 467-477 (QSQADQDQQAS). Phosphoserine is present on residues Ser481, Ser488, Ser523, Ser527, Ser560, Ser563, and Ser568. Residues 511–529 (RFTSQQGPIKPVSPNSSPF) are compositionally biased toward polar residues. Residues Thr570 and Thr590 each carry the phosphothreonine modification. Residues 587 to 600 (PGLTPSPSATTPLT) show a composition bias toward low complexity. Position 592 is a phosphoserine (Ser592).

Interacts with CTTN/cortactin; this interaction may redistribute CTTN to stress fibers. May form homomers. Associates with the core of STRIPAK complexes composed of PP2A catalytic and scaffolding subunits, the striatins (PP2A regulatory subunits), the striatin-associated proteins MOB4, STRIP1 and STRIP2, PDCD10 and members of the STE20 kinases, such as STK24 and STK26.

The protein localises to the cell projection. Its subcellular location is the lamellipodium. The protein resides in the cytoplasm. It localises to the cytoskeleton. It is found in the stress fiber. Its function is as follows. Regulates lamellipodial actin dynamics in a CTTN-dependent manner. Associates with core striatin-interacting phosphatase and kinase (STRIPAK) complex to form CTTNBP2NL-STRIPAK complexes. STRIPAK complexes have critical roles in protein (de)phosphorylation and are regulators of multiple signaling pathways including Hippo, MAPK, nuclear receptor and cytoskeleton remodeling. Different types of STRIPAK complexes are involved in a variety of biological processes such as cell growth, differentiation, apoptosis, metabolism and immune regulation. The protein is CTTNBP2 N-terminal-like protein (CTTNBP2NL) of Pongo abelii (Sumatran orangutan).